The primary structure comprises 386 residues: Ribonucleoside-diphosphate reductase subunit M2 (386 aa).

A compositionally biased stretch (polar residues) spans 1–24 (MSSTRSPLKTKNENTISTKMNNMS). The disordered stretch occupies residues 1 to 36 (MSSTRSPLKTKNENTISTKMNNMSFVDKENTPPSLS). Residue S6 is modified to Phosphoserine. T31 is subject to Phosphothreonine. D135, E166, and H169 together coordinate Fe cation. Y173 is an active-site residue. 3 residues coordinate Fe cation: E229, E263, and H266.

It belongs to the ribonucleoside diphosphate reductase small chain family. In terms of assembly, heterodimer of a large and a small subunit. Fe cation is required as a cofactor.

Its subcellular location is the cytoplasm. The enzyme catalyses a 2'-deoxyribonucleoside 5'-diphosphate + [thioredoxin]-disulfide + H2O = a ribonucleoside 5'-diphosphate + [thioredoxin]-dithiol. Functionally, provides the precursors necessary for DNA synthesis. Catalyzes the biosynthesis of deoxyribonucleotides from the corresponding ribonucleotides. The sequence is that of Ribonucleoside-diphosphate reductase subunit M2 (rrm2) from Danio rerio (Zebrafish).